The chain runs to 86 residues: Large ribosomal subunit protein bL27 (86 aa).

Gly residues predominate over residues 1–11 (MATKKAGGGSR). Residues 1–24 (MATKKAGGGSRNGRDSAGRRLGVK) are disordered.

This sequence belongs to the bacterial ribosomal protein bL27 family.

This chain is Large ribosomal subunit protein bL27, found in Rickettsia africae (strain ESF-5).